Consider the following 344-residue polypeptide: MAPGLTQTADAMSTVTITKPSLPSVQDSDRAYVTFLAGNGDYVKGVVGLAKGLRKVKSAYPLVVAMLPDVPEEHRRILVDQGCIVREIEPVYPPENQTQFAMAYYVINYSKLRIWKFVEYSKMIYLDGDIQVYENIDHLFDLPDGYLYAVMDCFCEKTWSHTPQYKIRYCQQCPDKVQWPKAELGEPPALYFNAGMFLYEPNLETYEDLLRTLKITPPTPFAEQDFLNMYFKKIYKPIPLVYNLVLAMLWRHPENVELGKVKVVHYCAAGSKPWRYTGKEANMEREDIKMLVKKWWDIYDDESLDYKKPVTVVDTEVDLVNLKPFITALTEAGRLNYVTAPSAA.

K111 is a catalytic residue. The Mn(2+) site is built by D127, D129, and H265.

The protein belongs to the glycosyltransferase 8 family. Galactosyltransferase subfamily. A divalent metal cation is required as a cofactor. Accumulates in mature seeds. Expressed in seedlings (axes and cotyledons), meristems, vascular tissues and emerging lateral roots. Present in abscission zones.

The protein resides in the cytoplasm. It catalyses the reaction myo-inositol + UDP-alpha-D-galactose = alpha-D-galactosyl-(1-&gt;3)-1D-myo-inositol + UDP + H(+). Its function is as follows. Galactinol synthase involved in the biosynthesis of raffinose family oligosaccharides (RFOs) that function as osmoprotectants. Promotes plant stress tolerance such as heat, chilling, salinity and methylviologen (MV), a superoxide radical generating drug, by mediating raffinose accumulation, an osmoprotective substance. The chain is Galactinol synthase 1 (GOLS1) from Arabidopsis thaliana (Mouse-ear cress).